Consider the following 200-residue polypeptide: dITP/XTP pyrophosphatase (200 aa).

8-13 (TGNQGK) lines the substrate pocket. Asp69 (proton acceptor) is an active-site residue. Asp69 provides a ligand contact to Mg(2+). Substrate is bound by residues Ser70, 154–157 (FGYD), Lys177, and 182–183 (HR).

This sequence belongs to the HAM1 NTPase family. Homodimer. Requires Mg(2+) as cofactor.

The enzyme catalyses XTP + H2O = XMP + diphosphate + H(+). The catalysed reaction is dITP + H2O = dIMP + diphosphate + H(+). It catalyses the reaction ITP + H2O = IMP + diphosphate + H(+). Its function is as follows. Pyrophosphatase that catalyzes the hydrolysis of nucleoside triphosphates to their monophosphate derivatives, with a high preference for the non-canonical purine nucleotides XTP (xanthosine triphosphate), dITP (deoxyinosine triphosphate) and ITP. Seems to function as a house-cleaning enzyme that removes non-canonical purine nucleotides from the nucleotide pool, thus preventing their incorporation into DNA/RNA and avoiding chromosomal lesions. The polypeptide is dITP/XTP pyrophosphatase (Vibrio cholerae serotype O1 (strain ATCC 39315 / El Tor Inaba N16961)).